A 689-amino-acid chain; its full sequence is Polyribonucleotide nucleotidyltransferase (689 aa).

Mg(2+)-binding residues include Asp482 and Asp488. Residues 549–608 (PRMITLTIPQNKIGELIGPGGKNIRKIQEDNNVKIDIEETGRVFISGVESDGVKSAKEYV) form the KH domain. Residues 618-686 (GKIYKSRVTK…KQGRINLSIK (69 aa)) enclose the S1 motif domain.

The protein belongs to the polyribonucleotide nucleotidyltransferase family. It depends on Mg(2+) as a cofactor.

It localises to the cytoplasm. It catalyses the reaction RNA(n+1) + phosphate = RNA(n) + a ribonucleoside 5'-diphosphate. Functionally, involved in mRNA degradation. Catalyzes the phosphorolysis of single-stranded polyribonucleotides processively in the 3'- to 5'-direction. The chain is Polyribonucleotide nucleotidyltransferase from Endomicrobium trichonymphae.